A 698-amino-acid chain; its full sequence is Elongation factor G (698 aa).

Positions 8–290 constitute a tr-type G domain; it reads ERYRNIGISA…AVIELLPSPT (283 aa). GTP-binding positions include 17 to 24, 88 to 92, and 142 to 145; these read AHIDAGKT, DTPGH, and NKMD.

This sequence belongs to the TRAFAC class translation factor GTPase superfamily. Classic translation factor GTPase family. EF-G/EF-2 subfamily.

It is found in the cytoplasm. In terms of biological role, catalyzes the GTP-dependent ribosomal translocation step during translation elongation. During this step, the ribosome changes from the pre-translocational (PRE) to the post-translocational (POST) state as the newly formed A-site-bound peptidyl-tRNA and P-site-bound deacylated tRNA move to the P and E sites, respectively. Catalyzes the coordinated movement of the two tRNA molecules, the mRNA and conformational changes in the ribosome. The sequence is that of Elongation factor G from Chromobacterium violaceum (strain ATCC 12472 / DSM 30191 / JCM 1249 / CCUG 213 / NBRC 12614 / NCIMB 9131 / NCTC 9757 / MK).